The primary structure comprises 395 residues: Succinyl-diaminopimelate desuccinylase (395 aa).

H74 contacts Zn(2+). D76 is an active-site residue. Zn(2+) is bound at residue D107. The active-site Proton acceptor is the E141. Positions 142, 170, and 368 each coordinate Zn(2+).

This sequence belongs to the peptidase M20A family. DapE subfamily. Homodimer. Zn(2+) serves as cofactor. It depends on Co(2+) as a cofactor.

The catalysed reaction is N-succinyl-(2S,6S)-2,6-diaminopimelate + H2O = (2S,6S)-2,6-diaminopimelate + succinate. It functions in the pathway amino-acid biosynthesis; L-lysine biosynthesis via DAP pathway; LL-2,6-diaminopimelate from (S)-tetrahydrodipicolinate (succinylase route): step 3/3. In terms of biological role, catalyzes the hydrolysis of N-succinyl-L,L-diaminopimelic acid (SDAP), forming succinate and LL-2,6-diaminopimelate (DAP), an intermediate involved in the bacterial biosynthesis of lysine and meso-diaminopimelic acid, an essential component of bacterial cell walls. The protein is Succinyl-diaminopimelate desuccinylase of Brucella canis (strain ATCC 23365 / NCTC 10854 / RM-666).